The primary structure comprises 357 residues: DENN domain-containing protein 10 (357 aa).

Positions 1 to 136 (MAAVVAMDTQ…IAVLTKGICQ (136 aa)) constitute a uDENN domain. A cDENN domain is found at 152 to 299 (KAYLAGSIKD…PEKSDSQVIQ (148 aa)). The region spanning 301 to 357 (IALKTKEIFTHLAPFSEVSDDGGKVILNVEALKQQRFPPATENFLYHLAAAEQMLKV) is the dDENN domain.

This sequence belongs to the DENND10 family. Interacts with the coiled-coil heterodimer of CCDC22 and CCDC93; the interaction is direct. Interacts with RAB27A and RAB27B (GDP-bound forms preferentially).

The protein resides in the late endosome. Functionally, guanine nucleotide exchange factor (GEF) regulating homeostasis of late endocytic pathway, including endosomal positioning, maturation and secretion, possibly through activating Rab proteins such as RAB27A and RAB27B. Promotes the exchange of GDP to GTP, converting inactive GDP-bound RAB27A and RAB27B into their active GTP-bound form. This Mus musculus (Mouse) protein is DENN domain-containing protein 10.